The following is a 185-amino-acid chain: Ribosome-recycling factor (185 aa).

The protein belongs to the RRF family.

Its subcellular location is the cytoplasm. In terms of biological role, responsible for the release of ribosomes from messenger RNA at the termination of protein biosynthesis. May increase the efficiency of translation by recycling ribosomes from one round of translation to another. In Legionella pneumophila (strain Corby), this protein is Ribosome-recycling factor.